Here is a 142-residue protein sequence, read N- to C-terminus: Crustacean hyperglycemic hormones (142 aa).

The N-terminal stretch at 1 to 26 (MYSKTIPAMLAIITVAYLCALPHAHA) is a signal peptide. Glutamine 67 is modified (pyrrolidone carboxylic acid; partial). 3 cysteine pairs are disulfide-bonded: cysteine 73–cysteine 109, cysteine 89–cysteine 105, and cysteine 92–cysteine 118. Valine 138 is subject to Valine amide.

Belongs to the arthropod CHH/MIH/GIH/VIH hormone family. Post-translationally, the N-terminus is blocked only in isoform CHH-II but not in isoform CHH-I. As to expression, produced by the medulla terminalis X-organ in the eyestalks and transported to the sinus gland where they are stored and released.

It localises to the secreted. In terms of biological role, hormone found in the sinus gland of isopods and decapods which controls the blood sugar level. Has a secretagogue action over the amylase released from the midgut gland. May act as a stress hormone and may be involved in the control of molting and reproduction. This Carcinus maenas (Common shore crab) protein is Crustacean hyperglycemic hormones.